Here is a 348-residue protein sequence, read N- to C-terminus: Spore development regulator vosA (348 aa).

The Velvet domain maps to 46-244; sequence ALSPSSCFLS…SDQGVRLRLR (199 aa). The disordered stretch occupies residues 250–294; sequence MMSNKRSISGSGDLTSDQSQQQQQQQPLAKKRREDSVESANPSSL. Positions 253-266 are enriched in polar residues; the sequence is NKRSISGSGDLTSD. The Nuclear localization signal signature appears at 274-280; it reads QQPLAKK.

The protein belongs to the velvet family. VosA subfamily. In terms of assembly, forms a heterodimeric complex with VEL2; the formation of the VEL2-VOS1 complex is light-dependent.

It is found in the nucleus. Functionally, component of the velB-VosA heterodimeric complex that plays a dual role in activating genes associated with spore maturation and repressing certain development-associated genes. The complex binds DNA through the DNA-binding domain of vosA that recognizes an 11-nucleotide consensus sequence 5'-CTGGCCGCGGC-3' consisting of two motifs in the promoters of key developmental regulatory genes. Regulates spore viability, trehalose accumulation, and tolerance to thermal and oxidative as well as ion stresses. Positively regulates conidial pigmentation and pathogenicity on barley. The sequence is that of Spore development regulator vosA from Cochliobolus sativus (strain ND90Pr / ATCC 201652) (Common root rot and spot blotch fungus).